The chain runs to 153 residues: UPF0178 protein Sfum_1097 (153 aa).

Belongs to the UPF0178 family.

This Syntrophobacter fumaroxidans (strain DSM 10017 / MPOB) protein is UPF0178 protein Sfum_1097.